The primary structure comprises 662 residues: DNA ligase (662 aa).

Residues 32–36 (DAEYD), 81–82 (SL), and Glu112 each bind NAD(+). Lys114 acts as the N6-AMP-lysine intermediate in catalysis. 4 residues coordinate NAD(+): Arg135, Glu170, Lys286, and Lys310. Zn(2+)-binding residues include Cys402, Cys405, Cys420, and Cys425. A BRCT domain is found at 583-662 (PKGGPLTGST…AELHAMLRGE (80 aa)).

Belongs to the NAD-dependent DNA ligase family. LigA subfamily. Mg(2+) serves as cofactor. Requires Mn(2+) as cofactor.

The catalysed reaction is NAD(+) + (deoxyribonucleotide)n-3'-hydroxyl + 5'-phospho-(deoxyribonucleotide)m = (deoxyribonucleotide)n+m + AMP + beta-nicotinamide D-nucleotide.. Functionally, DNA ligase that catalyzes the formation of phosphodiester linkages between 5'-phosphoryl and 3'-hydroxyl groups in double-stranded DNA using NAD as a coenzyme and as the energy source for the reaction. It is essential for DNA replication and repair of damaged DNA. The chain is DNA ligase from Solibacter usitatus (strain Ellin6076).